The primary structure comprises 353 residues: MRPATALIDLDALRHNYRLARSRHGGRALAVVKANAYGHGAVRCAQALAAEADGFAVAFLDEALELRAAGITQTIVLLEGVFDAAELEQVVAHGLWPVVHHAAQIEMIEQAALARPLDIWLKVNSGMNRAGFVGDAVGSAWQRLRASGKVGEITLMTHFARADEPQVIATAEQLADFDTATRGLPGPRSLANSAAVLGWPDAHADWARPGILLYGADPMPGEGNGLQPVMTLESGVIAVRDLAAGAPLGYGARYVAERPRRIGLVAMGYADGYPRSAPDGTPVVVDGQPSMLVGRVSMDMLTVDLTDLPQAGIGSRVELWGRQVPINQVAAGAGTIAYELLCNVKRVVFRYRG.

Lys-33 functions as the Proton acceptor; specific for D-alanine in the catalytic mechanism. Residue Lys-33 is modified to N6-(pyridoxal phosphate)lysine. Position 129 (Arg-129) interacts with substrate. Residue Tyr-250 is the Proton acceptor; specific for L-alanine of the active site. Met-298 provides a ligand contact to substrate.

This sequence belongs to the alanine racemase family. It depends on pyridoxal 5'-phosphate as a cofactor.

The enzyme catalyses L-alanine = D-alanine. The protein operates within amino-acid biosynthesis; D-alanine biosynthesis; D-alanine from L-alanine: step 1/1. In terms of biological role, catalyzes the interconversion of L-alanine and D-alanine. May also act on other amino acids. This chain is Alanine racemase (alr), found in Azoarcus sp. (strain BH72).